The chain runs to 375 residues: 23S rRNA (uracil(747)-C(5))-methyltransferase RlmC (375 aa).

Positions 3, 11, 14, and 87 each coordinate [4Fe-4S] cluster. S-adenosyl-L-methionine is bound by residues Q212, F241, E262, and N307. C334 functions as the Nucleophile in the catalytic mechanism.

The protein belongs to the class I-like SAM-binding methyltransferase superfamily. RNA M5U methyltransferase family. RlmC subfamily.

The catalysed reaction is uridine(747) in 23S rRNA + S-adenosyl-L-methionine = 5-methyluridine(747) in 23S rRNA + S-adenosyl-L-homocysteine + H(+). Catalyzes the formation of 5-methyl-uridine at position 747 (m5U747) in 23S rRNA. The sequence is that of 23S rRNA (uracil(747)-C(5))-methyltransferase RlmC from Salmonella agona (strain SL483).